The primary structure comprises 226 residues: MKVKKHRFPGVYIVIDDDGSEKIATKNLVPGQRVYGERVIKFEGEEYRIWNPSRSKLGAAILNGLKNFPIKPGSTVLYLGIASGTTASHVSDIVGWEGKIFGVEFSPRVLRELVPIVEERRNIVPILGDATKPEGYRALVPKVDVIFEDVAQPTQAKILIDNAKVFLKSGGYGMISVKSRSIDVTKEPEEVFKEVERELASYFEVVERLSLEPYEKDHALFVVRKP.

S-adenosyl-L-methionine is bound by residues 85 to 86, 104 to 105, 129 to 130, and 149 to 152; these read TT, EF, DA, and DVAQ.

It belongs to the methyltransferase superfamily. Fibrillarin family. Interacts with nop5. Component of box C/D small ribonucleoprotein (sRNP) particles that contain rpl7ae, FlpA and nop5, plus a guide RNA.

Functionally, involved in pre-rRNA and tRNA processing. Utilizes the methyl donor S-adenosyl-L-methionine to catalyze the site-specific 2'-hydroxyl methylation of ribose moieties in rRNA and tRNA. Site specificity is provided by a guide RNA that base pairs with the substrate. Methylation occurs at a characteristic distance from the sequence involved in base pairing with the guide RNA. This Thermococcus gammatolerans (strain DSM 15229 / JCM 11827 / EJ3) protein is Fibrillarin-like rRNA/tRNA 2'-O-methyltransferase.